The primary structure comprises 297 residues: Calponin-1 (297 aa).

Residues 28-131 (HQREQELREW…STLLALASMA (104 aa)) form the Calponin-homology (CH) domain. Calponin-like repeat units lie at residues 164–189 (IGLQ…RHLY), 204–229 (ISLQ…RQIF), and 243–268 (VSLQ…RQVY). T170 bears the Phosphothreonine; by ROCK2 mark. Phosphoserine; by ROCK2 is present on S175. Residues T180 and T184 each carry the phosphothreonine; by ROCK2 modification. T259 is modified (phosphothreonine; by ROCK2).

Belongs to the calponin family.

Its function is as follows. Thin filament-associated protein that is implicated in the regulation and modulation of smooth muscle contraction. It is capable of binding to actin, calmodulin and tropomyosin. The interaction of calponin with actin inhibits the actomyosin Mg-ATPase activity. The chain is Calponin-1 (CNN1) from Bos taurus (Bovine).